The chain runs to 486 residues: MSRFIDRVVLHVSAGKGGNGCASVHREKFKPLGGPDGGNGGRGGDVVLEVDGNVHTLLDFHFHPHAKATNGKQGMGSNRDGAQGDDLILRVPDGTVVLDEDGRILADLIGVGTRFEAAQGGRGGLGNAALSSKARKAPGFALLGEDGVERELVLELKSVADVGLVGFPSAGKSSLVSVLSAAKPKIADYPFTTLVPNLGVVSSGDTTFTVADVPGLIPGASDGRGLGLDFLRHLERCAVLAHVVDCATLDPGRDPISDIDALEAELAAYKGALSGDAGLGDLADRPRIVILNKADVPEAAELAEMVTPDLEARGWPVFTISAVSREGLRPLTFALAKLVADYREAHPKAEPKRQVIRPVISNENSFSVVADPEIPGGFIVRGTRPERWVRQTQFDNDEAVGYLADRLARLGVETELVKQGAEPGASVTIGNVSFDWEPQTPAGVDLTRTGRGTDPRLDQVERIGATERKHASRIRRGLEGLDPEDQ.

Residues 2–159 form the Obg domain; sequence SRFIDRVVLH…RELVLELKSV (158 aa). The OBG-type G domain occupies 160–340; it reads ADVGLVGFPS…LTFALAKLVA (181 aa). Residues 166-173, 191-195, 212-215, 292-295, and 321-323 each bind GTP; these read GFPSAGKS, FTTLV, DVPG, NKAD, and SAV. Residues serine 173 and threonine 193 each coordinate Mg(2+). Positions 358-438 constitute an OCT domain; it reads PVISNENSFS…IGNVSFDWEP (81 aa). The disordered stretch occupies residues 462-486; it reads RIGATERKHASRIRRGLEGLDPEDQ.

This sequence belongs to the TRAFAC class OBG-HflX-like GTPase superfamily. OBG GTPase family. In terms of assembly, monomer. Mg(2+) serves as cofactor.

It localises to the cytoplasm. In terms of biological role, an essential GTPase which binds GTP, GDP and possibly (p)ppGpp with moderate affinity, with high nucleotide exchange rates and a fairly low GTP hydrolysis rate. Plays a role in control of the cell cycle, stress response, ribosome biogenesis and in those bacteria that undergo differentiation, in morphogenesis control. The polypeptide is GTPase Obg (Rhodococcus jostii (strain RHA1)).